A 1058-amino-acid polypeptide reads, in one-letter code: Carbamoyl phosphate synthase large chain (1058 aa).

The interval 1-401 (MPKRTDIQKI…SLLKACRSLE (401 aa)) is carboxyphosphate synthetic domain. The ATP site is built by Arg-129, Arg-169, Gly-175, Gly-176, Arg-208, Ile-210, Glu-215, Gly-241, Ile-242, His-243, Gln-284, and Glu-298. Positions 133–327 (KQLMEELEQP…IAKLAAKIAV (195 aa)) constitute an ATP-grasp 1 domain. Gln-284, Glu-298, and Asn-300 together coordinate Mg(2+). 3 residues coordinate Mn(2+): Gln-284, Glu-298, and Asn-300. Residues 402 to 546 (IGVHHNEIPE…YSTYGWENES (145 aa)) are oligomerization domain. The segment at 547–929 (IRSDKESVLV…ALYKAFEASY (383 aa)) is carbamoyl phosphate synthetic domain. An ATP-grasp 2 domain is found at 671-861 (EQALKELDIP…MAQVATKLIL (191 aa)). The ATP site is built by Arg-707, Ser-746, Ile-748, Glu-752, Gly-777, Val-778, His-779, Ser-780, Gln-820, and Glu-832. Mg(2+) is bound by residues Gln-820, Glu-832, and Asn-834. Mn(2+) is bound by residues Gln-820, Glu-832, and Asn-834. In terms of domain architecture, MGS-like spans 930–1058 (LHLPTFGNVV…ESRSFVTEAI (129 aa)). The segment at 930–1058 (LHLPTFGNVV…ESRSFVTEAI (129 aa)) is allosteric domain.

The protein belongs to the CarB family. As to quaternary structure, composed of two chains; the small (or glutamine) chain promotes the hydrolysis of glutamine to ammonia, which is used by the large (or ammonia) chain to synthesize carbamoyl phosphate. Tetramer of heterodimers (alpha,beta)4. Mg(2+) serves as cofactor. Mn(2+) is required as a cofactor.

It carries out the reaction hydrogencarbonate + L-glutamine + 2 ATP + H2O = carbamoyl phosphate + L-glutamate + 2 ADP + phosphate + 2 H(+). The enzyme catalyses hydrogencarbonate + NH4(+) + 2 ATP = carbamoyl phosphate + 2 ADP + phosphate + 2 H(+). Its pathway is amino-acid biosynthesis; L-arginine biosynthesis; carbamoyl phosphate from bicarbonate: step 1/1. It participates in pyrimidine metabolism; UMP biosynthesis via de novo pathway; (S)-dihydroorotate from bicarbonate: step 1/3. In terms of biological role, large subunit of the glutamine-dependent carbamoyl phosphate synthetase (CPSase). CPSase catalyzes the formation of carbamoyl phosphate from the ammonia moiety of glutamine, carbonate, and phosphate donated by ATP, constituting the first step of 2 biosynthetic pathways, one leading to arginine and/or urea and the other to pyrimidine nucleotides. The large subunit (synthetase) binds the substrates ammonia (free or transferred from glutamine from the small subunit), hydrogencarbonate and ATP and carries out an ATP-coupled ligase reaction, activating hydrogencarbonate by forming carboxy phosphate which reacts with ammonia to form carbamoyl phosphate. The polypeptide is Carbamoyl phosphate synthase large chain (Streptococcus pneumoniae (strain JJA)).